The primary structure comprises 494 residues: DnaJ homolog subfamily C member 7 (494 aa).

Alanine 2 is subject to N-acetylalanine. TPR repeat units follow at residues 28–61 (AETFKEQGNAYYAKKDYNEAYNYYTKAIDMCPKN), 62–95 (ASYYGNRAATLMMLGRFREALGDAQQSVRLDDSF), 96–129 (VRGHLREGKCHLSLGNAMAACRSFQRALELDHKN), 142–175 (VMEYEKIAETDFEKRDFRKVVFCMDRALEFAPAC), 177–209 (RFKILKAECLAMLGRYPEAQSVASDILRMDSTN), 210–243 (ADALYVRGLCLYYEDCIEKAVQFFVQALRMAPDH), 256–289 (LKAKKEDGNKAFKEGNYKLAYELYTEALGIDPNN), 294–327 (AKLYCNRGTVNSKLRKLDDAIEDCTNAVKLDDTY), and 328–361 (IKAYLRRAQCYMDTEQYEEAVRDYEKVYQTEKTK). Residues 381–451 (DYYKILGVDK…KKKTRYDSGQ (71 aa)) enclose the J domain. At serine 393 the chain carries Phosphoserine.

In terms of assembly, associates with complexes containing chaperones HSP70 and HSP90. Interacts with the GAP domain of NF1. Interacts with HSP90AA1. Interacts with HSPA1A/B; the interaction is enhanced by ATP. Interacts with HSP90AB1. Interacts with PGR. Interacts with RAD9A; the interaction is interrupted by UV and heat shock treatments. Interacts with HUS1 and RAD1. Interacts with NR1I3. The DNAJC7-NR1I3 complex may also include HSP90. Interacts with HSPA8.

The protein localises to the cytoplasm. Its subcellular location is the nucleus. It localises to the cytoskeleton. Acts as a co-chaperone regulating the molecular chaperones HSP70 and HSP90 in folding of steroid receptors, such as the glucocorticoid receptor and the progesterone receptor. Proposed to act as a recycling chaperone by facilitating the return of chaperone substrates to early stages of chaperoning if further folding is required. In vitro, induces ATP-independent dissociation of HSP90 but not of HSP70 from the chaperone-substrate complexes. Recruits NR1I3 to the cytoplasm. This chain is DnaJ homolog subfamily C member 7 (DNAJC7), found in Homo sapiens (Human).